The following is a 218-amino-acid chain: Ribose-5-phosphate isomerase A (218 aa).

Substrate is bound by residues 28-31, 81-84, and 94-97; these read TGST, DGAD, and KGGG. The Proton acceptor role is filled by Glu-103. Lys-121 contacts substrate.

The protein belongs to the ribose 5-phosphate isomerase family. Homodimer.

The catalysed reaction is aldehydo-D-ribose 5-phosphate = D-ribulose 5-phosphate. Its pathway is carbohydrate degradation; pentose phosphate pathway; D-ribose 5-phosphate from D-ribulose 5-phosphate (non-oxidative stage): step 1/1. Catalyzes the reversible conversion of ribose-5-phosphate to ribulose 5-phosphate. The chain is Ribose-5-phosphate isomerase A from Vibrio campbellii (strain ATCC BAA-1116).